Reading from the N-terminus, the 317-residue chain is Olfactory receptor 1082 (317 aa).

The Extracellular segment spans residues 1–26 (MESGNSTRRFSSFFLLGFTENPQLHF). Asn5 is a glycosylation site (N-linked (GlcNAc...) asparagine). The chain crosses the membrane as a helical span at residues 27–51 (LIFALFLSMYLVTVLGNLLIIMAII). The Cytoplasmic portion of the chain corresponds to 52-58 (TQSHLHT). A helical transmembrane segment spans residues 59-80 (PMYFFLANLSFVDICFTSTTIP). Residues 81-101 (KMLVNIYTQSKSITYEDCISQ) are Extracellular-facing. Cysteines 98 and 190 form a disulfide. The chain crosses the membrane as a helical span at residues 102 to 121 (MCVFLVFAELGNFLLAVMAY). The Cytoplasmic portion of the chain corresponds to 122 to 140 (DRYVAXCHPLCYTVIVNHR). Residues 141-159 (LCILLLLLSWVISIFHAFI) traverse the membrane as a helical segment. Residues 160–197 (QSLIVLQLTFCGDVKIPHFFCELNQLSQLTCSDNFPSH) are Extracellular-facing. The helical transmembrane segment at 198-220 (LIMNLVPVMLAAISFSGILYSYF) threads the bilayer. Topologically, residues 221 to 237 (KIVSSIHSISTVQGKYK) are cytoplasmic. A helical transmembrane segment spans residues 238–261 (AFSTCASHLSIVSLFYSTGLGVYV). Over 262-273 (SSAVVQSSHSAA) the chain is Extracellular. A helical membrane pass occupies residues 274–293 (SASVMYTVVTPMLNPFIYSL). The Cytoplasmic segment spans residues 294-317 (RNKDVKRALERLLEGNCKVHHWTG).

This sequence belongs to the G-protein coupled receptor 1 family. In terms of tissue distribution, olfactory epithelium.

It localises to the cell membrane. Functionally, odorant receptor. The sequence is that of Olfactory receptor 1082 (Olr1082) from Rattus norvegicus (Rat).